A 304-amino-acid polypeptide reads, in one-letter code: CRISPR-associated endonuclease Cas1 (304 aa).

Mn(2+) is bound by residues glutamate 148, histidine 204, and glutamate 219.

It belongs to the CRISPR-associated endonuclease Cas1 family. Homodimer, forms a heterotetramer with a Cas2 homodimer. The cofactor is Mg(2+). Mn(2+) serves as cofactor.

Its function is as follows. CRISPR (clustered regularly interspaced short palindromic repeat), is an adaptive immune system that provides protection against mobile genetic elements (viruses, transposable elements and conjugative plasmids). CRISPR clusters contain spacers, sequences complementary to antecedent mobile elements, and target invading nucleic acids. CRISPR clusters are transcribed and processed into CRISPR RNA (crRNA). Acts as a dsDNA endonuclease. Involved in the integration of spacer DNA into the CRISPR cassette. This Neisseria meningitidis serogroup C (strain 8013) protein is CRISPR-associated endonuclease Cas1.